Consider the following 20-residue polypeptide: Cathepsin L-like cysteine proteinase (20 aa).

It belongs to the peptidase C1 family.

It is found in the lysosome. Functionally, thiol protease. The sequence is that of Cathepsin L-like cysteine proteinase from Fasciola hepatica (Liver fluke).